The sequence spans 464 residues: Probable glycosyltransferase Saci_1499 (464 aa).

Helical transmembrane passes span 6 to 26 (IFLNLLLFVYPAVFIIYQIIL), 300 to 320 (LIIYLLQYTPVIVTFFISTLL), 337 to 357 (ALLFWLVSLGLYASLLLSLAL), 373 to 393 (LTAFTVSISPFIVFNFFKGLL), 416 to 436 (IIAIIGVFGLLYLLSSILYIY), and 439 to 459 (YYVTGIWLLYYSSAYLYTMLL).

The protein belongs to the glycosyltransferase 2 family.

The protein resides in the cell membrane. In terms of biological role, probably part of a 4-gene DNA damage response locus in which the upstream ups system, in combination with this downstream locus, functions in homologous recombination to rescue Sulfolobales from DNA-damaging threats. The sequence is that of Probable glycosyltransferase Saci_1499 from Sulfolobus acidocaldarius (strain ATCC 33909 / DSM 639 / JCM 8929 / NBRC 15157 / NCIMB 11770).